A 297-amino-acid polypeptide reads, in one-letter code: Polyhedral envelope protein (297 aa).

Belongs to the baculoviridae PE family.

The protein localises to the virion membrane. Major component of the polyhedra envelope. In Orgyia pseudotsugata (Douglas-fir tussock moth), this protein is Polyhedral envelope protein.